The primary structure comprises 226 residues: Peroxiredoxin-like 2C (226 aa).

This sequence belongs to the peroxiredoxin-like PRXL2 family. PRXL2C subfamily. As to expression, expressed in gastric tissues.

May positively regulate ERK1/2 signaling and AKT1 activation leading to HIF1A up-regulation with an increased expression of glycolysis genes and enhanced glycolysis. This is Peroxiredoxin-like 2C from Homo sapiens (Human).